We begin with the raw amino-acid sequence, 462 residues long: Anthranilate synthase component 1 (462 aa).

Residues serine 37 and 244 to 246 contribute to the L-tryptophan site; that span reads PYM. 279-280 is a chorismate binding site; that stretch reads GT. Position 306 (glutamate 306) interacts with Mg(2+). Chorismate is bound by residues tyrosine 394, arginine 414, 428–430, and glycine 430; that span reads GAG. Residue glutamate 443 coordinates Mg(2+).

This sequence belongs to the anthranilate synthase component I family. As to quaternary structure, heterotetramer consisting of two non-identical subunits: a beta subunit (TrpG) and a large alpha subunit (TrpE). Mg(2+) serves as cofactor.

The catalysed reaction is chorismate + L-glutamine = anthranilate + pyruvate + L-glutamate + H(+). It functions in the pathway amino-acid biosynthesis; L-tryptophan biosynthesis; L-tryptophan from chorismate: step 1/5. Its activity is regulated as follows. Feedback inhibited by tryptophan. In terms of biological role, part of a heterotetrameric complex that catalyzes the two-step biosynthesis of anthranilate, an intermediate in the biosynthesis of L-tryptophan. In the first step, the glutamine-binding beta subunit (TrpG) of anthranilate synthase (AS) provides the glutamine amidotransferase activity which generates ammonia as a substrate that, along with chorismate, is used in the second step, catalyzed by the large alpha subunit of AS (TrpE) to produce anthranilate. In the absence of TrpG, TrpE can synthesize anthranilate directly from chorismate and high concentrations of ammonia. The polypeptide is Anthranilate synthase component 1 (trpE) (Thermus thermophilus (strain ATCC 27634 / DSM 579 / HB8)).